The following is a 326-amino-acid chain: MKSIAIIGASGYTGAQITSLINADCNFSVQGLYVSENSLDKGRKLADLYPTYSHMAYTLSPLSDDAKKKIVAEADAVVLATEHSVSLELAAWFYQQGLAVFDLSGAYRFADVAQYPKWYGFEHTHPDVLAQAVYGLAEWNSEQIKQTRMIAVPGCYPTASLTALKPLKPFLTEMYPVINAVSGVTGAGRKAQLHTSFCEVSLTPYGVLGHRHQPEIATHLGQEVIFTPHLGNFKRGILATITVQLKPGTTEADVAKAYSVYDNAPIVTVKHNQFPKVDDVVNTPNCHLGWKYDANSGYLVVASAIDNLMKGAASQGLQCIKIHFGV.

Residue Cys155 is part of the active site.

This sequence belongs to the NAGSA dehydrogenase family. Type 1 subfamily.

The protein resides in the cytoplasm. It catalyses the reaction N-acetyl-L-glutamate 5-semialdehyde + phosphate + NADP(+) = N-acetyl-L-glutamyl 5-phosphate + NADPH + H(+). It participates in amino-acid biosynthesis; L-arginine biosynthesis; N(2)-acetyl-L-ornithine from L-glutamate: step 3/4. Catalyzes the NADPH-dependent reduction of N-acetyl-5-glutamyl phosphate to yield N-acetyl-L-glutamate 5-semialdehyde. The polypeptide is N-acetyl-gamma-glutamyl-phosphate reductase (Shewanella frigidimarina (strain NCIMB 400)).